A 67-amino-acid polypeptide reads, in one-letter code: Arasin 2 (67 aa).

A signal peptide spans 1 to 25; that stretch reads MERRTLLVVLLVCSCVVAAAAEASP. The segment at 22–44 is disordered; sequence EASPSRWPSPGRPRPFPGRPNPI. Residues 31–44 are compositionally biased toward pro residues; that stretch reads PGRPRPFPGRPNPI. Disulfide bonds link Cys50–Cys59 and Cys52–Cys57.

As to quaternary structure, interacts with chitin through the N-terminal region (26-48). This interaction may be important, since chitin is a component of the fungal cell wall, as well as of the crab exoskeleton (permitting a possible action of arasin in wound healing in case of lesions). Post-translationally, disulfide bonds are important for activity especially against Gram-negative bacteria, since the linearization of the peptide causes a strong decrease of activity on these bacteria. In terms of tissue distribution, mainly expressed in hemocytes. No or very low expression in heart, gills, inestines, and epidermis.

In terms of biological role, antimicrobial peptide that has a large activity spectrum with activity against Gram-positive, Gram-negative bacteria, as well as against fungi. Shows activity at micromolar concentrations. Displays minimal inhibitory concentration (MIC) values lower than minimal bactericidal concentrations (MBC). May have a dual mode of action depending on the peptide concentrations. At MIC concentrations, the peptide penetrates into the cytoplasm of target cells (tested on the Gram-negative E.coli). The two inner membrane proteins YgdD and SbmA may be required for this uptake. At concentrations higher than MIC, arasin may act by disrupting membranes. Does not show hemolytic activity. The protein is Arasin 2 of Hyas araneus (Atlantic lyre crab).